The following is an 88-amino-acid chain: Auxin-responsive protein SAUR21 (88 aa).

The protein belongs to the ARG7 family.

It is found in the cell membrane. Its function is as follows. Functions as a positive effector of cell expansion through modulation of auxin transport. In Arabidopsis thaliana (Mouse-ear cress), this protein is Auxin-responsive protein SAUR21.